A 165-amino-acid chain; its full sequence is Peptide methionine sulfoxide reductase MsrA (165 aa).

Residue C11 is part of the active site.

The protein belongs to the MsrA Met sulfoxide reductase family.

It carries out the reaction L-methionyl-[protein] + [thioredoxin]-disulfide + H2O = L-methionyl-(S)-S-oxide-[protein] + [thioredoxin]-dithiol. The catalysed reaction is [thioredoxin]-disulfide + L-methionine + H2O = L-methionine (S)-S-oxide + [thioredoxin]-dithiol. In terms of biological role, has an important function as a repair enzyme for proteins that have been inactivated by oxidation. Catalyzes the reversible oxidation-reduction of methionine sulfoxide in proteins to methionine. The polypeptide is Peptide methionine sulfoxide reductase MsrA (Ureaplasma parvum serovar 3 (strain ATCC 27815 / 27 / NCTC 11736)).